Here is a 170-residue protein sequence, read N- to C-terminus: Large ribosomal subunit protein uL11 (170 aa).

Belongs to the universal ribosomal protein uL11 family. In terms of assembly, part of the ribosomal stalk of the 50S ribosomal subunit. Interacts with L10 and the large rRNA to form the base of the stalk. L10 forms an elongated spine to which L12 dimers bind in a sequential fashion forming a multimeric L10(L12)X complex.

Its function is as follows. Forms part of the ribosomal stalk which helps the ribosome interact with GTP-bound translation factors. This chain is Large ribosomal subunit protein uL11, found in Desulfurococcus amylolyticus (strain DSM 18924 / JCM 16383 / VKM B-2413 / 1221n) (Desulfurococcus kamchatkensis).